The chain runs to 221 residues: 7-cyano-7-deazaguanine synthase (221 aa).

Residue 10 to 20 (FSGGQDSTTCL) coordinates ATP. Residues C186, C195, C198, and C201 each contribute to the Zn(2+) site.

The protein belongs to the QueC family. Homodimer. It depends on Zn(2+) as a cofactor.

It carries out the reaction 7-carboxy-7-deazaguanine + NH4(+) + ATP = 7-cyano-7-deazaguanine + ADP + phosphate + H2O + H(+). The protein operates within purine metabolism; 7-cyano-7-deazaguanine biosynthesis. Its function is as follows. Catalyzes the ATP-dependent conversion of 7-carboxy-7-deazaguanine (CDG) to 7-cyano-7-deazaguanine (preQ(0)). The polypeptide is 7-cyano-7-deazaguanine synthase (Anoxybacillus flavithermus (strain DSM 21510 / WK1)).